We begin with the raw amino-acid sequence, 725 residues long: IML2-like protein SCY_3392 (725 aa).

The residue at position 196 (threonine 196) is a Phosphothreonine. 3 positions are modified to phosphoserine: serine 246, serine 377, and serine 380.

This sequence belongs to the IML2 family.

The protein resides in the cytoplasm. It is found in the nucleus. May be involved in mitochondrial DNA stability. In Saccharomyces cerevisiae (strain YJM789) (Baker's yeast), this protein is IML2-like protein SCY_3392.